Consider the following 478-residue polypeptide: GTPase Obg (478 aa).

The 158-residue stretch at 2–159 folds into the Obg domain; that stretch reads TTFVDRVELH…QDIHLELKTV (158 aa). The interval 60 to 88 is disordered; that stretch reads YHHSPHRKATNGKPGEGGNRSGKDGQDLV. Residues 160–330 form the OBG-type G domain; sequence ADVALVGYPS…LSFALAELVA (171 aa). GTP contacts are provided by residues 166 to 173, 191 to 195, 212 to 215, 282 to 285, and 311 to 313; these read GYPSAGKS, FTTLV, DVPG, NKID, and SAV. Residues Ser173 and Thr193 each contribute to the Mg(2+) site. The 83-residue stretch at 348-430 folds into the OCT domain; sequence PKAVDDAGFT…DNAVVFDWEP (83 aa). The disordered stretch occupies residues 438 to 478; sequence MLGRRGEDHRFEAPRPAAQRRRDRDAERDEAQQEFDGFEPF. 2 stretches are compositionally biased toward basic and acidic residues: residues 439-450 and 457-468; these read LGRRGEDHRFEA and RRRDRDAERDEA. Positions 469–478 are enriched in acidic residues; that stretch reads QQEFDGFEPF.

This sequence belongs to the TRAFAC class OBG-HflX-like GTPase superfamily. OBG GTPase family. In terms of assembly, monomer. It depends on Mg(2+) as a cofactor.

The protein localises to the cytoplasm. The protein resides in the cell membrane. Functionally, plays an unknown essential role and a regulatory role in sporulation. Overexpression suppresses sporulation although cell growth rate was not reduced. Impaired differentiation was eliminated by addition of decoyinine, an inhibitor of GMP synthesis. Overexpression has no effect on undecylprodigiosin production, but decreases actinorhodin production. Its function is as follows. An essential GTPase which binds GTP, GDP and possibly (p)ppGpp with moderate affinity, with high nucleotide exchange rates and a fairly low GTP hydrolysis rate. Plays a role in control of the cell cycle, stress response, ribosome biogenesis and in those bacteria that undergo differentiation, in morphogenesis control. The protein is GTPase Obg of Streptomyces coelicolor (strain ATCC BAA-471 / A3(2) / M145).